Reading from the N-terminus, the 307-residue chain is MKHIISPLDLSLSELSDVLNLAEKIIVDPKQYSECCQGKKLATLFYEPSTRTRLSFEAAMLNLGGSVLGFSSADSSSAAKGESVADTIRVISSYADICAMRHPKEGAPLVASTYSSIPVINAGDGGHNHPTQTLTDLLTIKNLKGRLDNLTIGFCGDLKFGRTVHSLINAMVRYEGIKFVLISPEELKIPAYLREEVLDRGNIPYEEVKNLEAVMPELDILYMTRVQKERFFNEEDYIRLKDSFILDAKKMEGAKEDMLVLHPLPRVNEIATEIDNDPRAVYFKQAEFGVYARMALIMLLLNVVPQE.

2 residues coordinate carbamoyl phosphate: arginine 51 and threonine 52. Residue lysine 80 coordinates L-aspartate. Arginine 101, histidine 129, and glutamine 132 together coordinate carbamoyl phosphate. Residues arginine 162 and arginine 225 each contribute to the L-aspartate site. Residues leucine 264 and proline 265 each coordinate carbamoyl phosphate.

Belongs to the aspartate/ornithine carbamoyltransferase superfamily. ATCase family. Heterododecamer (2C3:3R2) of six catalytic PyrB chains organized as two trimers (C3), and six regulatory PyrI chains organized as three dimers (R2).

The enzyme catalyses carbamoyl phosphate + L-aspartate = N-carbamoyl-L-aspartate + phosphate + H(+). Its pathway is pyrimidine metabolism; UMP biosynthesis via de novo pathway; (S)-dihydroorotate from bicarbonate: step 2/3. In terms of biological role, catalyzes the condensation of carbamoyl phosphate and aspartate to form carbamoyl aspartate and inorganic phosphate, the committed step in the de novo pyrimidine nucleotide biosynthesis pathway. The polypeptide is Aspartate carbamoyltransferase catalytic subunit (Lachnoclostridium phytofermentans (strain ATCC 700394 / DSM 18823 / ISDg) (Clostridium phytofermentans)).